Here is a 149-residue protein sequence, read N- to C-terminus: Flagellar assembly factor FliW (149 aa).

This sequence belongs to the FliW family. As to quaternary structure, interacts with translational regulator CsrA and flagellin(s).

The protein resides in the cytoplasm. Its function is as follows. Acts as an anti-CsrA protein, binds CsrA and prevents it from repressing translation of its target genes, one of which is flagellin. Binds to flagellin and participates in the assembly of the flagellum. This chain is Flagellar assembly factor FliW, found in Thermotoga maritima (strain ATCC 43589 / DSM 3109 / JCM 10099 / NBRC 100826 / MSB8).